Reading from the N-terminus, the 434-residue chain is F-box/LRR-repeat protein 21 (434 aa).

The F-box domain occupies 39–85; the sequence is RLDWGSLPHRVVLCVFQYLPLIDRARASSVCRRWNEVFHIPDLWRKF. LRR repeat units follow at residues 140 to 165, 187 to 213, 214 to 239, 242 to 265, 322 to 347, 349 to 374, and 375 to 400; these read LVNC…SKSH, DTPV…KMSS, CPHV…ALNY, LSDE…RIDV, GRSV…VVCA, GIQV…GLSE, and CEVS…SIME.

In terms of assembly, part of the SCF (SKP1-CUL1-F-box) E3 ubiquitin-protein ligase complex SCF(FBXL21) composed of CUL1, SKP1, RBX1 and FBXL21. Interacts with CRY2. Interacts with CRY1. Expressed in the adenohypophysis, hypothalamus (especially in the suprachiasmatic nucleus or nuclei, SCN) and pineal, all neuroendocrine structures associated with timing and homeostasis.

Its subcellular location is the cytoplasm. It is found in the cytosol. It localises to the nucleus. The protein operates within protein modification; protein ubiquitination. In terms of biological role, substrate-recognition component of the SCF(FBXL21) E3 ubiquitin ligase complex involved in circadian rhythm function. Plays a key role in the maintenance of both the speed and the robustness of the circadian clock oscillation. The SCF(FBXL21) complex mainly acts in the cytosol and mediates ubiquitination of CRY proteins (CRY1 and CRY2), leading to CRY proteins stabilization. The SCF(FBXL21) complex counteracts the activity of the SCF(FBXL3) complex and protects CRY proteins from degradation. Involved in the hypothalamic suprachiasmatic nucleus (SCN) clock regulating temporal organization of the daily activities. The protein is F-box/LRR-repeat protein 21 (Fbxl21) of Ovis aries (Sheep).